Here is a 461-residue protein sequence, read N- to C-terminus: Vitamin K-dependent protein C (461 aa).

The N-terminal stretch at 1–18 (MWQFRIFLLFASTWGISG) is a signal peptide. Residues 19 to 41 (VSAHPDPVFSSSEGAHQVLRVRR) constitute a propeptide that is removed on maturation. Positions 42-87 (ANSFLEEVRAGSLERECMEEICDFEEAQEIFQNVEDTLAFWIKYFD) constitute a Gla domain. 10 positions are modified to 4-carboxyglutamate: Glu47, Glu48, Glu55, Glu57, Glu60, Glu61, Glu66, Glu67, Glu70, and Glu76. A disulfide bridge connects residues Cys58 and Cys63. Intrachain disulfides connect Cys91–Cys110, Cys100–Cys105, Cys104–Cys119, Cys121–Cys130, Cys139–Cys150, Cys146–Cys159, Cys161–Cys174, Cys182–Cys320, and Cys239–Cys255. 2 EGF-like domains span residues 96–131 (LDHQCDSPCCGHGTCIDGLGGFSCSCDKGWEGRFCQ) and 135–175 (GFQD…MHCR). Asp112 carries the (3R)-3-hydroxyaspartate modification. In terms of domain architecture, Peptidase S1 spans 213–450 (IVNGTLTKQG…YLKWIHSYIG (238 aa)). Asn215 carries an N-linked (GlcNAc...) asparagine glycan. The active-site Charge relay system is His254. Asn291 is a glycosylation site (N-linked (GlcNAc...) asparagine). The active-site Charge relay system is the Asp300. Asn355 carries N-linked (GlcNAc...) asparagine glycosylation. Cystine bridges form between Cys373-Cys387 and Cys398-Cys426. Catalysis depends on Ser402, which acts as the Charge relay system.

It belongs to the peptidase S1 family. Synthesized as a single chain precursor, which is cleaved into a light chain and a heavy chain held together by a disulfide bond. The enzyme is then activated by thrombin, which cleaves a tetradecapeptide from the amino end of the heavy chain; this reaction, which occurs at the surface of endothelial cells, is strongly promoted by thrombomodulin. The vitamin K-dependent, enzymatic carboxylation of some Glu residues allows the modified protein to bind calcium. In terms of processing, the iron and 2-oxoglutarate dependent 3-hydroxylation of aspartate and asparagine is (R) stereospecific within EGF domains. In terms of tissue distribution, plasma; synthesized in the liver.

Its subcellular location is the secreted. It is found in the golgi apparatus. It localises to the endoplasmic reticulum. The enzyme catalyses Degradation of blood coagulation factors Va and VIIIa.. Its function is as follows. Protein C is a vitamin K-dependent serine protease that regulates blood coagulation by inactivating factors Va and VIIIa in the presence of calcium ions and phospholipids. Exerts a protective effect on the endothelial cell barrier function. This chain is Vitamin K-dependent protein C (Proc), found in Rattus norvegicus (Rat).